A 757-amino-acid polypeptide reads, in one-letter code: Transferrin receptor protein 1 (757 aa).

Topologically, residues 1–67 (MMDQARSAIS…KHRRLNGRLC (67 aa)) are cytoplasmic. The segment at 1 to 67 (MMDQARSAIS…KHRRLNGRLC (67 aa)) is mediates interaction with SH3BP4. Phosphoserine occurs at positions 10 and 19. Position 20 is a phosphotyrosine (Tyr20). The Endocytosis signal motif lies at 20-23 (YTRF). The residue at position 21 (Thr21) is a Phosphothreonine. Ser24 bears the Phosphoserine mark. The Stop-transfer sequence motif lies at 58 to 61 (KHRR). Cys67 is lipidated: S-palmitoyl cysteine. The helical; Signal-anchor for type II membrane protein transmembrane segment at 68–88 (FGTIAVVIFFLIGFMIGYLGY) threads the bilayer. Residues 89-757 (CKRTEQKDCV…GDIWDIDNEF (669 aa)) lie on the Extracellular side of the membrane. An O-linked (GalNAc...) threonine glycan is attached at Thr103. Positions 220-310 (SKATTVSGKL…GTGDPYTPGF (91 aa)) constitute a PA domain. N-linked (GlcNAc...) asparagine glycans are attached at residues Asn248 and Asn314. The interval 566-757 (NLDTYEKLIQ…GDIWDIDNEF (192 aa)) is ligand-binding. A Cell attachment site motif is present at residues 643-645 (RGD). Asn719 and Asn724 each carry an N-linked (GlcNAc...) asparagine glycan.

It belongs to the peptidase M28 family. M28B subfamily. Homodimer; disulfide-linked. Binds one transferrin molecule per subunit. Interacts with SH3BP4. Interacts with STEAP3; facilitates TFRC endocytosis in erythroid precursor cells. In terms of processing, stearoylated by ZDHHC6 which inhibits TFRC-mediated activation of the JNK pathway and promotes mitochondrial fragmentation. Stearoylation does not affect iron uptake. Post-translationally, N- and O-glycosylated, phosphorylated and palmitoylated.

The protein resides in the cell membrane. It is found in the melanosome. Cellular uptake of iron occurs via receptor-mediated endocytosis of ligand-occupied transferrin receptor into specialized endosomes. Endosomal acidification leads to iron release. The apotransferrin-receptor complex is then recycled to the cell surface with a return to neutral pH and the concomitant loss of affinity of apotransferrin for its receptor. Transferrin receptor is necessary for development of erythrocytes and the nervous system. Positively regulates T and B cell proliferation through iron uptake. Acts as a lipid sensor that regulates mitochondrial fusion by regulating activation of the JNK pathway. When dietary levels of stearate (C18:0) are low, promotes activation of the JNK pathway, resulting in HUWE1-mediated ubiquitination and subsequent degradation of the mitofusin MFN2 and inhibition of mitochondrial fusion. When dietary levels of stearate (C18:0) are high, TFRC stearoylation inhibits activation of the JNK pathway and thus degradation of the mitofusin MFN2. Mediates uptake of NICOL1 into fibroblasts where it may regulate extracellular matrix production. The protein is Transferrin receptor protein 1 (TFRC) of Cricetulus griseus (Chinese hamster).